A 579-amino-acid chain; its full sequence is V-type ATP synthase alpha chain (579 aa).

227 to 234 (GGFGTGKT) is an ATP binding site.

Belongs to the ATPase alpha/beta chains family.

It carries out the reaction ATP + H2O + 4 H(+)(in) = ADP + phosphate + 5 H(+)(out). In terms of biological role, produces ATP from ADP in the presence of a proton gradient across the membrane. The V-type alpha chain is a catalytic subunit. This is V-type ATP synthase alpha chain from Anaeromyxobacter sp. (strain K).